Here is a 538-residue protein sequence, read N- to C-terminus: MGLLLLVLILTPSLAAYRHPDFPLLEKAQQLLQSTGSPYSTNCWLCTSSSTETPGTAYPASPREWTSIEAELHISYRWDPNLKGLMRPANSLLSTVKQDFPDIRQKPPIFGPIFTNINLMGIAPICVTAKRKNGTNVGTLPSTVCNVTFTVDSNQQTYQTYTHNQFRHQPRFPKPPNITFPQGTLLDKSSRFCQGRPSSCSTRNFWFRPADYNQCLQISNLSSTAEWVLLDQTRNSLFWENKTKGANQSQTPCVQVLAGMTIATSYLGISAVSEFFGTSLTPLFHFHISTCLKTQGAFYICGQLIHQCLPSNWTGTCTIGYVTPDIFIAPGNLSLPIPIYGNSQLPRVRRAIHFIPLLAGLGILAGTGTGIAGITKASLTYSQLSKEIANNIDTMAKALTTMQEQIDSLAAVVLQNRRGLDMLTAAQGGICLALDEKCCFWVNQSGKVQDNIRQLLNQASSLRERATQGWLNWEGTWKWFSWVLPLTGPLVSLLLLLLFGPCLLNLITQFVSSRLQAIKLQTNLSAGRRPRNIQESPF.

A signal peptide spans 1–15; that stretch reads MGLLLLVLILTPSLA. Over 16–478 the chain is Extracellular; sequence AYRHPDFPLL…GWLNWEGTWK (463 aa). The CXXC signature appears at 43–46; it reads CWLC. Disulfide bonds link Cys43/Cys46, Cys43/Cys439, and Cys431/Cys438. Residues Asn133, Asn146, Asn177, Asn220, Asn241, Asn247, Asn312, and Asn332 are each glycosylated (N-linked (GlcNAc...) asparagine). The fusion peptide stretch occupies residues 354–374; sequence FIPLLAGLGILAGTGTGIAGI. The short motif at 414–430 is the CKS-17 element; that stretch reads LQNRRGLDMLTAAQGGI. The CX6CC motif lies at 431-439; sequence CLALDEKCC. Asn443 carries an N-linked (GlcNAc...) asparagine glycan. The chain crosses the membrane as a helical span at residues 479-499; sequence WFSWVLPLTGPLVSLLLLLLF. Over 500–538 the chain is Cytoplasmic; it reads GPCLLNLITQFVSSRLQAIKLQTNLSAGRRPRNIQESPF.

This sequence belongs to the gamma type-C retroviral envelope protein family. HERV class-I FRD env subfamily. The surface and transmembrane proteins form a heterodimer. They are attached by non-covalent interactions or by a labile interchain disulfide bond. Specific enzymatic cleavages in vivo yield the mature SU and TM proteins. Post-translationally, the CXXC motif is highly conserved across a broad range of retroviral envelope proteins. It is thought to participate in the formation of a labile disulfide bond possibly with the CX6CC motif present in the transmembrane protein.

The protein localises to the virion. Its subcellular location is the cell membrane. This endogenous retroviral envelope protein has retained its original fusogenic properties and participates in trophoblast fusion and the formation of a syncytium during placenta morphogenesis. The interaction with MFSD2A is apparently important for this process. Its function is as follows. Endogenous envelope proteins may have kept, lost or modified their original function during evolution but this one can still make pseudotypes with MLV, HIV-1 or SIV-1 virions and confer infectivity. Retroviral envelope proteins mediate receptor recognition and membrane fusion during early infection. The surface protein mediates receptor recognition, while the transmembrane protein anchors the envelope heterodimer to the viral membrane through one transmembrane domain. The other hydrophobic domain, called fusion peptide, mediates fusion of the viral membrane with the target cell membrane. This Gorilla gorilla gorilla (Western lowland gorilla) protein is Syncytin-2 (ERVFRD-1).